We begin with the raw amino-acid sequence, 382 residues long: Layilin (382 aa).

An N-terminal signal peptide occupies residues 1 to 21; sequence MRPGTALQAVLLAVLLVGLRA. At 22–235 the chain is on the extracellular side; that stretch reads ATGRLLSASD…SREAALNLAY (214 aa). The C-type lectin domain occupies 45–185; sequence TQRPCYKVIY…CNMKNNFICK (141 aa). 2 cysteine pairs are disulfide-bonded: Cys71/Cys184 and Cys150/Cys176. N-linked (GlcNAc...) asparagine glycosylation is present at Asn117. The chain crosses the membrane as a helical span at residues 236-256; that stretch reads ILIPSIPLLLLLVVTTVVCWV. The Cytoplasmic segment spans residues 257–382; the sequence is WICRKRKREQ…GWVENEIYGY (126 aa). Residues 266–285 form a disordered region; that stretch reads QPDPSTKKQHTIWPSPHQGN. Phosphoserine occurs at positions 286 and 299. The segment at 330–374 is interaction with NF2; that stretch reads DYDNMAVNPSESGFVTLVSVESGFVTNDIYEFSPDQMGRSKESGW. Residues 337–382 are interaction with TLN1; sequence NPSESGFVTLVSVESGFVTNDIYEFSPDQMGRSKESGWVENEIYGY. 5 tandem repeats follow at residues 340-344, 350-354, 356-359, 371-375, and 377-380. Residues 340-375 are 3 X 5 AA repeats of E-S-G-X-V; sequence ESGFVTLVSVESGFVTNDIYEFSPDQMGRSKESGWV. The 2 X 4 AA repeats of N-X-I-Y stretch occupies residues 356–380; sequence NDIYEFSPDQMGRSKESGWVENEIY.

Interacts with NF2, RDX and TLN1.

The protein resides in the membrane. In terms of biological role, receptor for hyaluronate. The protein is Layilin (LAYN) of Homo sapiens (Human).